Here is a 503-residue protein sequence, read N- to C-terminus: Interferon regulatory factor 7 (503 aa).

The IRF tryptophan pentad repeat DNA-binding region spans 11 to 126 (RVLFGEWLLG…DPHKVYALSR (116 aa)). Residues 69–88 (RWPPSSRGGGPPPEAETAER) are disordered. Lys92 bears the N6-acetyllysine; by KAT2A and KAT2B mark. 2 disordered regions span residues 133 to 156 (GPGTDQTEAEAPAAVPPPQGGPPG) and 242 to 277 (TTPSPGPQPAALTTGEAAAPESPHQAEPYLSPSPSA). Positions 146 to 156 (AVPPPQGGPPG) are enriched in pro residues. A necessary for the interaction with NMI region spans residues 284 to 456 (PSPGALDVTI…SLVLVKLEPW (173 aa)). Residue Lys375 forms a Glycyl lysine isopeptide (Lys-Gly) (interchain with G-Cter in ubiquitin) linkage. Glycyl lysine isopeptide (Lys-Gly) (interchain with G-Cter in SUMO) cross-links involve residues Lys444 and Lys446. 3 positions are modified to phosphoserine: Ser471, Ser472, and Ser475. Residues Ser477 and Ser479 each carry the phosphoserine; by TBK1 and IKKE modification. Ser483, Ser484, and Ser487 each carry phosphoserine.

This sequence belongs to the IRF family. In terms of assembly, monomer. Homodimer; phosphorylation-induced. Heterodimer with IRF3. Interacts with TICAM1 and TICAM2. Interacts with MYD88 and TRAF6. Interacts with TRIM35. Interacts with NMI; the interaction is direct and leads to the inhibition of IRF7-mediated type I IFN production. Interacts with GBP4; preventing interaction between TRAF6 and IRF7, resulting in impaired TRAF6-mediated IRF7 ubiquitination. As to quaternary structure, (Microbial infection) Interacts with Epstein-Barr virus LF2 and LMP1. (Microbial infection) Interacts with rotavirus A NSP1; this interaction leads to the proteasome-dependent degradation of IRF7. In terms of assembly, (Microbial infection) Interacts with human herpes virus 8/HHV-8 proteins ORF45 and vIRF-1. As to quaternary structure, (Microbial infection) Interacts with human T-cell leukemia virus 1/HTLV-1 protein HBZ. (Microbial infection) Interacts with Seneca Valley virus protease 3C; this interaction is involved in the suppression of IRF7 expression and phosphorylation by the virus. In terms of assembly, (Microbial infection) Interacts with ebolavirus VP35; this interaction mediates the sumoylation of IRF7 and contributes to the viral inhibition of IFN-type I production. As to quaternary structure, (Microbial infection) Interacts with severe fever with thrombocytopenia syndrome virus (SFTSV) NSs; this interaction sequesters IRF7 in NSs-induced cytoplasmic inclusion bodies. (Microbial infection) Interacts with herpes virus 8/HHV-8 protein vIRF-4; this interaction prevents IRF7 dimerization and subsequent activation. In terms of assembly, (Microbial infection) Interacts with human metapneumovirus protein M2-2; this interaction prevents IRF7 phosphorlyation and subsequent TLR7/9-dependent IFN-alpha induction. In terms of processing, acetylation inhibits its DNA-binding ability and activity. Post-translationally, in response to a viral infection, phosphorylated on Ser-477 and Ser-479 by TBK1 and IKBKE1. Phosphorylation, and subsequent activation is inhibited by vaccinia virus protein E3. In TLR7- and TLR9-mediated signaling pathway, phosphorylated by IRAK1. TRAF6-mediated ubiquitination is required for IRF7 activation. TRIM35 mediates IRF7 'Lys-48'-linked polyubiquitination and subsequent proteasomal degradation. Ubiquitinated by UBE3C, leading to its degradation. In terms of processing, sumoylated by TRIM28, which inhibits its transactivation activity. Post-translationally, (Microbial infection) Cleaved and inactivated by the protease 3C of enterovirus 71 allowing the virus to disrupt the host type I interferon production. (Microbial infection) Cleaved and inactivated by the protease 3C of human enterovirus 68D (EV68) allowing the virus to disrupt the host type I interferon production. In terms of processing, 'Lys-48'-linked polyubiquitination and subsequent proteasomal degradation is NMI-dependent in response to Sendai virus infection. Post-translationally, 'Lys-63'-linked ubiquitination by NEURL3 promotes IRF7 activation. As to expression, expressed predominantly in spleen, thymus and peripheral blood leukocytes.

It localises to the nucleus. It is found in the cytoplasm. In the absence of viral infection, maintained as a monomer in an autoinhibited state and phosphorylation disrupts this autoinhibition leading to the liberation of the DNA-binding and dimerization activities and its nuclear localization where it can activate type I IFN and ISG genes. Its function is as follows. Key transcriptional regulator of type I interferon (IFN)-dependent immune responses and plays a critical role in the innate immune response against DNA and RNA viruses. Regulates the transcription of type I IFN genes (IFN-alpha and IFN-beta) and IFN-stimulated genes (ISG) by binding to an interferon-stimulated response element (ISRE) in their promoters. Can efficiently activate both the IFN-beta (IFNB) and the IFN-alpha (IFNA) genes and mediate their induction via both the virus-activated, MyD88-independent pathway and the TLR-activated, MyD88-dependent pathway. Induces transcription of ubiquitin hydrolase USP25 mRNA in response to lipopolysaccharide (LPS) or viral infection in a type I IFN-dependent manner. Required during both the early and late phases of the IFN gene induction but is more critical for the late than for the early phase. Exists in an inactive form in the cytoplasm of uninfected cells and following viral infection, double-stranded RNA (dsRNA), or toll-like receptor (TLR) signaling, becomes phosphorylated by IKBKE and TBK1 kinases. This induces a conformational change, leading to its dimerization and nuclear localization where along with other coactivators it can activate transcription of the type I IFN and ISG genes. Can also play a role in regulating adaptive immune responses by inducing PSMB9/LMP2 expression, either directly or through induction of IRF1. Binds to the Q promoter (Qp) of EBV nuclear antigen 1 a (EBNA1) and may play a role in the regulation of EBV latency. Can activate distinct gene expression programs in macrophages and regulate the anti-tumor properties of primary macrophages. This chain is Interferon regulatory factor 7 (IRF7), found in Homo sapiens (Human).